The following is a 351-amino-acid chain: Probable dual-specificity RNA methyltransferase RlmN (351 aa).

Catalysis depends on Glu-98, which acts as the Proton acceptor. The region spanning 104-332 (TQKRLTVCVS…ASIRRSRGLD (229 aa)) is the Radical SAM core domain. Cys-111 and Cys-337 are disulfide-bonded. [4Fe-4S] cluster contacts are provided by Cys-118, Cys-122, and Cys-125. Residues 165 to 166 (GE), Ser-195, 218 to 220 (SLH), and Asn-294 contribute to the S-adenosyl-L-methionine site. The active-site S-methylcysteine intermediate is Cys-337.

The protein belongs to the radical SAM superfamily. RlmN family. [4Fe-4S] cluster serves as cofactor.

It is found in the cytoplasm. It carries out the reaction adenosine(2503) in 23S rRNA + 2 reduced [2Fe-2S]-[ferredoxin] + 2 S-adenosyl-L-methionine = 2-methyladenosine(2503) in 23S rRNA + 5'-deoxyadenosine + L-methionine + 2 oxidized [2Fe-2S]-[ferredoxin] + S-adenosyl-L-homocysteine. The enzyme catalyses adenosine(37) in tRNA + 2 reduced [2Fe-2S]-[ferredoxin] + 2 S-adenosyl-L-methionine = 2-methyladenosine(37) in tRNA + 5'-deoxyadenosine + L-methionine + 2 oxidized [2Fe-2S]-[ferredoxin] + S-adenosyl-L-homocysteine. In terms of biological role, specifically methylates position 2 of adenine 2503 in 23S rRNA and position 2 of adenine 37 in tRNAs. This chain is Probable dual-specificity RNA methyltransferase RlmN, found in Acaryochloris marina (strain MBIC 11017).